The primary structure comprises 260 residues: MILDKIAASTKIRVENLKKEVSFSFVKSEASKLVNKSPFAFEKAVKDGELTFICEIKKASPSKGLISENFPYIDIAKDYEAAGAGAISVLTEPEFFLGSDQYLKDVKKTVSIPVLRKDFTIDPYQIYEAALIGADCVLLICALLDTDTLKEYIKIADGLGLSCLVEAHDENEVKSAIEAGSRIVGVNNRNLKTFEVDITNSIRLRELVPSDISFVSESGIRTAQDISALRRIGASAVLIGETLMRSGDTGAELAKLRGSA.

It belongs to the TrpC family.

The enzyme catalyses 1-(2-carboxyphenylamino)-1-deoxy-D-ribulose 5-phosphate + H(+) = (1S,2R)-1-C-(indol-3-yl)glycerol 3-phosphate + CO2 + H2O. The protein operates within amino-acid biosynthesis; L-tryptophan biosynthesis; L-tryptophan from chorismate: step 4/5. This chain is Indole-3-glycerol phosphate synthase, found in Ruminiclostridium cellulolyticum (strain ATCC 35319 / DSM 5812 / JCM 6584 / H10) (Clostridium cellulolyticum).